A 485-amino-acid polypeptide reads, in one-letter code: MGMNRVLVSQAAGGLAEYLKGYDKEPSIVIGYDGRKNSDVFARDTAEIMAGAGVKAYLLPRKLPTPVLAYAIQYFDTTAGVMVTASHNPPEDNGYKVYLGKANGGGQIVSPADKDIAALIDKVAAGNIQDLPRSDNYVVLNDEVVDAYITKTASLAKEPACDINYVYTAMHGVGYEVLSKTLAKAGLPQPHVVADQVWPDGTFPTVNFPNPEEKGALDLAIKVAKEKNAEFIIANDPDADRLAVAVPDAQGNWKSLHGNVVGCFLGWYLAKQYQGKQGTLACSLVSSPALAEIAKKYSFQSEETLTGFKYIGKVSGLLFGFEEALGYLVDPDKVRDKDGISAAIVFLDLVRNLKKQGKTLADYADEFTKEFGAYVSGQISIRVSDLSEIGKLMTALRNNPPAEIAGVKVAQFIDHIKTDRQSDILVFNLENGGRLIARPSGTEPKIKFYLDARGKDPKDADRVLAEFDEGVRHILRQDAYGKQDC.

Serine 86 (phosphoserine intermediate) is an active-site residue. Positions 86, 236, 238, and 240 each coordinate Mg(2+).

This sequence belongs to the phosphohexose mutase family. Requires Mg(2+) as cofactor.

It carries out the reaction alpha-D-mannose 1-phosphate = D-mannose 6-phosphate. In Haemophilus influenzae (strain ATCC 51907 / DSM 11121 / KW20 / Rd), this protein is Probable phosphomannomutase.